A 270-amino-acid chain; its full sequence is uncharacterized protein (270 aa).

10 consecutive transmembrane segments (helical) span residues 12–32, 35–55, 64–84, 88–108, 117–137, 138–158, 171–191, 194–214, 226–246, and 248–268; these read AAIV…RNVG, TLSV…PFCL, TLLG…AAIQ, VAMA…LSVL, TLLA…PYAE, LTFG…VFVL, ITFY…LMFG, GSWL…FVLF, APIL…FYFG, and TLTL…LIAW. EamA domains are found at residues 19-133 and 150-269; these read VLMG…LMLT and LSYA…IAWR.

This sequence belongs to the EamA transporter family.

The protein localises to the cell membrane. This is an uncharacterized protein from Archaeoglobus fulgidus (strain ATCC 49558 / DSM 4304 / JCM 9628 / NBRC 100126 / VC-16).